We begin with the raw amino-acid sequence, 630 residues long: Chaperone protein HtpG (630 aa).

The a; substrate-binding stretch occupies residues 1 to 339; the sequence is MSHTETHAFQ…SNDLPLNVSR (339 aa). The tract at residues 340–556 is b; it reads EILQSNRVVD…EGDISAHMAR (217 aa). Positions 557–630 are c; it reads MMEQMGQAMP…RMNALLSEVI (74 aa).

The protein belongs to the heat shock protein 90 family. In terms of assembly, homodimer.

The protein localises to the cytoplasm. Functionally, molecular chaperone. Has ATPase activity. In Hydrogenovibrio crunogenus (strain DSM 25203 / XCL-2) (Thiomicrospira crunogena), this protein is Chaperone protein HtpG.